A 540-amino-acid polypeptide reads, in one-letter code: Lysosomal cobalamin transport escort protein LMBD1 (540 aa).

Residues 1–10 lie on the Extracellular side of the membrane; sequence MATSGAASAE. A helical membrane pass occupies residues 11-31; that stretch reads LVIGWCIFGLLLLAILAFCWI. The Cytoplasmic segment spans residues 32–50; the sequence is YVRKYQSRRESEVVSTITA. Residues 51–71 traverse the membrane as a helical segment; it reads IFSLAIALITSALLPVDIFLV. Topologically, residues 72–100 are extracellular; it reads SYMKNQNGTFKDWANANVSRQIEDTVLYG. Asn78 and Asn88 each carry an N-linked (GlcNAc...) asparagine glycan. A helical membrane pass occupies residues 101–121; that stretch reads YYTLYSVILFCVFFWIPFVYF. Residues 122–144 lie on the Cytoplasmic side of the membrane; it reads YYEEKDDDDTSKCTQIKTALKYT. The chain crosses the membrane as a helical span at residues 145–165; that stretch reads LGFVVICALLLLVGAFVPLNV. Residues 166 to 188 are Extracellular-facing; the sequence is PNNKNSTEWEKVKSLFEELGSSH. N-linked (GlcNAc...) asparagine glycosylation is present at Asn170. Residues 189 to 209 form a helical membrane-spanning segment; sequence GLAALSFSISSLTLIGMLAAI. Residues 210–305 are Cytoplasmic-facing; the sequence is TYTAYGMSAL…KFCGALRPLK (96 aa). Positions 232–235 match the YERL motif; mediates interaction with adapter protein complex 2 and is essential for its function in clathrin-mediated endocytosis of INSR motif; the sequence is YERL. Phosphothreonine is present on Thr238. Positions 294 to 297 match the WTKF motif; mediates interaction with adapter protein complex 2 and is essential for its function in clathrin-mediated endocytosis of INSR motif; it reads WTKF. Residues 306 to 326 form a helical membrane-spanning segment; sequence IVWGIFFILVALLFVISLFLS. The Extracellular segment spans residues 327–364; that stretch reads NLDKALHSAGIDSGFIIFGANLSNPLNMLLPLLQTVFP. N-linked (GlcNAc...) asparagine glycosylation occurs at Asn347. The chain crosses the membrane as a helical span at residues 365–385; sequence LDYILITIIIMYFIFTSMAGI. Topologically, residues 386-408 are cytoplasmic; the sequence is RNIGIWFFWIRLYKIRRGRTRPQ. The helical transmembrane segment at 409–429 threads the bilayer; sequence ALLFLCMILLLIVLHTSYMIY. The Extracellular portion of the chain corresponds to 430–486; the sequence is SLAPQYVMYGSQNYLIETNITSDNHKGNSTLSVPKRCDADAPEDQCTVTRTYLFLHK. 2 N-linked (GlcNAc...) asparagine glycosylation sites follow: Asn448 and Asn457. Residues 487-507 traverse the membrane as a helical segment; it reads FWFFSAAYYFGNWAFLGVFLI. Residues 508–540 lie on the Cytoplasmic side of the membrane; it reads GLIVSCCKGKKSVIEGVDEDSDISDDEPSVYSA. Ser528 and Ser531 each carry phosphoserine.

It belongs to the LIMR family. LMBRD1 subfamily. As to quaternary structure, (Microbial infection) Interacts with hepatitis delta virus NES (HDAg-L). Interacts with ABCD4; this interaction induces the translocation of ABCD4 from the endoplasmic reticulum to the lysosome. Interacts with ABCD4 and MMACHC; this interaction ensures the transport of cobalamin from the lysosome to the cytoplasm. Interacts with INSR, adapter protein complex 2 and clathrin heavy chain. Post-translationally, N-glycosylated. Isoform 3 is expressed in liver.

The protein localises to the endoplasmic reticulum membrane. It localises to the lysosome membrane. The protein resides in the cell membrane. It is found in the cytoplasmic vesicle. Its subcellular location is the clathrin-coated vesicle. Lysosomal membrane chaperone required to export cobalamin (vitamin B12) from the lysosome to the cytosol, allowing its conversion to cofactors. Targets ABCD4 transporter from the endoplasmic reticulum to the lysosome. Then forms a complex with lysosomal ABCD4 and cytoplasmic MMACHC to transport cobalamin across the lysosomal membrane. Acts as an adapter protein which plays an important role in mediating and regulating the internalization of the insulin receptor (INSR). Involved in clathrin-mediated endocytosis of INSR via its interaction with adapter protein complex 2. Essential for the initiation of gastrulation and early formation of mesoderm structures during embryogenesis. In terms of biological role, (Microbial infection) May play a role in the assembly of hepatitis delta virus (HDV). The chain is Lysosomal cobalamin transport escort protein LMBD1 from Homo sapiens (Human).